The primary structure comprises 88 residues: Apolipoprotein C-I (88 aa).

Positions 1–26 (MRLFLSLPVLVVVLAMVLEGPAPTQA) are cleaved as a signal peptide.

The protein belongs to the apolipoprotein C1 family.

It is found in the secreted. Functionally, inhibitor of lipoprotein binding to the low density lipoprotein (LDL) receptor, LDL receptor-related protein, and very low density lipoprotein (VLDL) receptor. Associates with high density lipoproteins (HDL) and the triacylglycerol-rich lipoproteins in the plasma and makes up about 10% of the protein of the VLDL and 2% of that of HDL. Appears to interfere directly with fatty acid uptake and is also the major plasma inhibitor of cholesteryl ester transfer protein (CETP). Binds free fatty acids and reduces their intracellular esterification. Modulates the interaction of APOE with beta-migrating VLDL and inhibits binding of beta-VLDL to the LDL receptor-related protein. The chain is Apolipoprotein C-I (APOC1) from Leptonychotes weddellii (Weddell seal).